The chain runs to 202 residues: tRNA (guanine-N(7)-)-methyltransferase (202 aa).

Glutamate 34, glutamate 59, aspartate 86, and aspartate 107 together coordinate S-adenosyl-L-methionine. Aspartate 107 is an active-site residue. Substrate contacts are provided by residues lysine 111, aspartate 143, and 181 to 184 (TDYE).

It belongs to the class I-like SAM-binding methyltransferase superfamily. TrmB family.

It catalyses the reaction guanosine(46) in tRNA + S-adenosyl-L-methionine = N(7)-methylguanosine(46) in tRNA + S-adenosyl-L-homocysteine. The protein operates within tRNA modification; N(7)-methylguanine-tRNA biosynthesis. Its function is as follows. Catalyzes the formation of N(7)-methylguanine at position 46 (m7G46) in tRNA. This is tRNA (guanine-N(7)-)-methyltransferase from Metamycoplasma hominis (strain ATCC 23114 / DSM 25592 / NBRC 14850 / NCTC 10111 / PG21) (Mycoplasma hominis).